We begin with the raw amino-acid sequence, 128 residues long: Aspartate 1-decarboxylase (128 aa).

Ser-25 acts as the Schiff-base intermediate with substrate; via pyruvic acid in catalysis. Ser-25 carries the pyruvic acid (Ser) modification. A substrate-binding site is contributed by Thr-57. The Proton donor role is filled by Tyr-58. 73–75 (GSA) provides a ligand contact to substrate.

This sequence belongs to the PanD family. As to quaternary structure, heterooctamer of four alpha and four beta subunits. It depends on pyruvate as a cofactor. Post-translationally, is synthesized initially as an inactive proenzyme, which is activated by self-cleavage at a specific serine bond to produce a beta-subunit with a hydroxyl group at its C-terminus and an alpha-subunit with a pyruvoyl group at its N-terminus.

Its subcellular location is the cytoplasm. It carries out the reaction L-aspartate + H(+) = beta-alanine + CO2. Its pathway is cofactor biosynthesis; (R)-pantothenate biosynthesis; beta-alanine from L-aspartate: step 1/1. In terms of biological role, catalyzes the pyruvoyl-dependent decarboxylation of aspartate to produce beta-alanine. The polypeptide is Aspartate 1-decarboxylase (Burkholderia cenocepacia (strain HI2424)).